We begin with the raw amino-acid sequence, 393 residues long: Na(+)/H(+) antiporter NhaA (393 aa).

Helical transmembrane passes span 23-43 (AGGI…NSPF), 58-78 (LSLA…LVGL), 96-116 (MLPG…FAVL), 126-146 (GWAV…SLLG), 155-175 (VFLA…IAIF), 178-198 (AEIS…LFVM), 201-221 (MGVV…FFVF), 224-244 (GVHA…KPAP), 265-285 (VAFI…FKGL), 298-318 (ILLG…WLAI), 334-354 (LYGV…IGLL), and 367-387 (IGVL…LRAA).

The protein belongs to the NhaA Na(+)/H(+) (TC 2.A.33) antiporter family.

It is found in the cell inner membrane. The enzyme catalyses Na(+)(in) + 2 H(+)(out) = Na(+)(out) + 2 H(+)(in). Its function is as follows. Na(+)/H(+) antiporter that extrudes sodium in exchange for external protons. The chain is Na(+)/H(+) antiporter NhaA from Brucella suis (strain ATCC 23445 / NCTC 10510).